Reading from the N-terminus, the 428-residue chain is Cell division protein FtsZ (428 aa).

GTP is bound by residues 73 to 77 (GGGGN), 160 to 162 (GTG), Glu-191, Arg-195, and Asp-239. The segment at 378–428 (NAANARVVSAPPKRTPTQTPLTNSPAPTPEPKEKSGLDIPDFLQRRRPPKN) is disordered. Positions 392–402 (TPTQTPLTNSP) are enriched in polar residues.

This sequence belongs to the FtsZ family. Homodimer. Polymerizes to form a dynamic ring structure in a strictly GTP-dependent manner. Interacts directly with several other division proteins.

It localises to the cytoplasm. In terms of biological role, essential cell division protein that forms a contractile ring structure (Z ring) at the future cell division site. The regulation of the ring assembly controls the timing and the location of cell division. One of the functions of the FtsZ ring is to recruit other cell division proteins to the septum to produce a new cell wall between the dividing cells. Binds GTP and shows GTPase activity. This Nostoc sp. (strain PCC 7120 / SAG 25.82 / UTEX 2576) protein is Cell division protein FtsZ.